Consider the following 59-residue polypeptide: Ribosome modulation factor (59 aa).

This sequence belongs to the ribosome modulation factor family.

It is found in the cytoplasm. In terms of biological role, during stationary phase, converts 70S ribosomes to an inactive dimeric form (100S ribosomes). The chain is Ribosome modulation factor from Aeromonas veronii (strain B565).